The chain runs to 273 residues: Translation initiation factor IF-3, mitochondrial (273 aa).

Residues 1 to 32 (MAALFLKKLTLQTVKTENYCIRRCLGKYILQG) constitute a mitochondrion transit peptide. A propeptide spans 33–92 (PAPTQQPPRPSCLIHAKAFSTEDTQDEMTKKKKNETAFSSVGRKINERIIHVLDEQGNDL) (removed in mature form). The tract at residues 242 to 273 (EEAAWKAAPDTPRRDALNGGDGKDGASGVLPQ) is disordered. Over residues 252–265 (TPRRDALNGGDGKD) the composition is skewed to basic and acidic residues.

Belongs to the IF-3 family.

The protein localises to the mitochondrion. Functionally, IF-3 binds to the 28S ribosomal subunit and shifts the equilibrium between 55S ribosomes and their 39S and 28S subunits in favor of the free subunits, thus enhancing the availability of 28S subunits on which protein synthesis initiation begins. The polypeptide is Translation initiation factor IF-3, mitochondrial (MTIF3) (Bos taurus (Bovine)).